Consider the following 634-residue polypeptide: Chaperone protein HtpG (634 aa).

An a; substrate-binding region spans residues 1 to 339 (MAQETMSFQA…SADLPLNVSR (339 aa)). A b region spans residues 340–559 (EILQESRDVK…DGEMSGYLQR (220 aa)). The interval 560–634 (MLKAAGQQAP…ALLLARANEA (75 aa)) is c.

This sequence belongs to the heat shock protein 90 family. Homodimer.

The protein resides in the cytoplasm. In terms of biological role, molecular chaperone. Has ATPase activity. The sequence is that of Chaperone protein HtpG from Paraburkholderia xenovorans (strain LB400).